Here is a 291-residue protein sequence, read N- to C-terminus: Elongation factor Ts (291 aa).

The interval 79 to 82 (TDFV) is involved in Mg(2+) ion dislocation from EF-Tu.

This sequence belongs to the EF-Ts family.

The protein resides in the cytoplasm. Its function is as follows. Associates with the EF-Tu.GDP complex and induces the exchange of GDP to GTP. It remains bound to the aminoacyl-tRNA.EF-Tu.GTP complex up to the GTP hydrolysis stage on the ribosome. This is Elongation factor Ts from Roseobacter denitrificans (strain ATCC 33942 / OCh 114) (Erythrobacter sp. (strain OCh 114)).